The sequence spans 85 residues: Large ribosomal subunit protein bL27 (85 aa).

The tract at residues 1–22 (MAHKKGQGSSRNGRDSPGQHRG) is disordered.

The protein belongs to the bacterial ribosomal protein bL27 family.

The sequence is that of Large ribosomal subunit protein bL27 from Anaeromyxobacter sp. (strain Fw109-5).